The chain runs to 207 residues: Oligoribonuclease (207 aa).

An Exonuclease domain is found at 8 to 172 (LVWIDCEMTG…ADILESVREL (165 aa)). Residue tyrosine 129 is part of the active site.

It belongs to the oligoribonuclease family.

The protein localises to the cytoplasm. Functionally, 3'-to-5' exoribonuclease specific for small oligoribonucleotides. This Leifsonia xyli subsp. xyli (strain CTCB07) protein is Oligoribonuclease.